The chain runs to 368 residues: tRNA(Met) cytidine acetate ligase (368 aa).

ATP-binding positions include 7 to 20 (IAEFNPFHNGHKYL), glycine 96, asparagine 152, and arginine 175.

This sequence belongs to the TmcAL family.

It is found in the cytoplasm. The catalysed reaction is cytidine(34) in elongator tRNA(Met) + acetate + ATP = N(4)-acetylcytidine(34) in elongator tRNA(Met) + AMP + diphosphate. Functionally, catalyzes the formation of N(4)-acetylcytidine (ac(4)C) at the wobble position of elongator tRNA(Met), using acetate and ATP as substrates. First activates an acetate ion to form acetyladenylate (Ac-AMP) and then transfers the acetyl group to tRNA to form ac(4)C34. The sequence is that of tRNA(Met) cytidine acetate ligase from Streptococcus pyogenes serotype M28 (strain MGAS6180).